The sequence spans 435 residues: Minor fimbrial subunit HifE (435 aa).

An N-terminal signal peptide occupies residues 1–31 (MKTLTTYAKYFTPISKIAFLFCFLMGNIAEA).

The protein belongs to the fimbrial protein family.

The protein localises to the fimbrium. Its function is as follows. May be a minor structural protein required for pilus biogenesis. May be the adhesive component in the pili. The polypeptide is Minor fimbrial subunit HifE (hifE) (Haemophilus influenzae).